A 336-amino-acid chain; its full sequence is 4-hydroxy-2-oxovalerate aldolase (336 aa).

One can recognise a Pyruvate carboxyltransferase domain in the interval 5–255 (IRIIDSTLRD…ETGVDLYKIM (251 aa)). Residue 13-14 (RD) coordinates substrate. D14 lines the Mn(2+) pocket. H17 (proton acceptor) is an active-site residue. Substrate contacts are provided by S167 and H194. Mn(2+) contacts are provided by H194 and H196. Y285 contributes to the substrate binding site.

This sequence belongs to the 4-hydroxy-2-oxovalerate aldolase family.

The enzyme catalyses (S)-4-hydroxy-2-oxopentanoate = acetaldehyde + pyruvate. The polypeptide is 4-hydroxy-2-oxovalerate aldolase (mhpE) (Carboxydothermus hydrogenoformans (strain ATCC BAA-161 / DSM 6008 / Z-2901)).